The sequence spans 316 residues: Neutrophil-stimulating factor 1 (316 aa).

Residues 1-21 form the signal peptide; the sequence is METSLPITVVFLIVLITGAQT. The segment at 126 to 316 is involved in interaction with human CD47; sequence HGEMLERMTA…WFAVSWNDRG (191 aa). N169 carries N-linked (GlcNAc...) asparagine glycosylation.

In terms of assembly, interacts with human CD4. Interacts with human CD47; the interaction results in inhibition of phagocytosis activity of host macrophages. In terms of tissue distribution, female salivary gland (at protein level). Saliva (at protein level). Some expression in ovary and midgut (at protein level).

The protein localises to the secreted. In terms of biological role, activates host neutrophils; induces expression of IL1B and CXCL2 at the bite site. Promotes activation of human CD4(+) T-cells. Inhibits phagocytosis activity of host macrophages via the interaction with CD47 receptor on their surface. Suppresses expression of pro-inflammatory cytokines, such as IFN-gamma/IFNG, IL2, TNF-alpha/TNF, IL12B, IL8/CXCL8, IL6, in host white blood cells. Reduces host polymorphonuclear neutrophil chemotaxis induced by N-formylmethionine-leucylphenylalanine (fMLF). Reduces CD11b/ITGAM expression in fMLF-induced host polymorphonuclear neutrophils. Functionally, (Microbial infection) Enhances early replication of Zika virus in the host. The polypeptide is Neutrophil-stimulating factor 1 (Aedes aegypti (Yellowfever mosquito)).